We begin with the raw amino-acid sequence, 67 residues long: Toxin Cex8 (67 aa).

Residue Ala-1 is a signal peptide. Residues 2-65 (KEGYLVNIYT…SYPYPEKSCG (64 aa)) form the LCN-type CS-alpha/beta domain. Disulfide bonds link Cys-13-Cys-64, Cys-17-Cys-40, Cys-26-Cys-45, and Cys-30-Cys-47. Residue Cys-64 is modified to Cysteine amide. A propeptide spanning residues 65–67 (GRK) is cleaved from the precursor.

Belongs to the long (4 C-C) scorpion toxin superfamily. Sodium channel inhibitor family. Beta subfamily. As to expression, expressed by the venom gland.

The protein localises to the secreted. Its function is as follows. Beta toxins bind voltage-independently at site-4 of sodium channels (Nav) and shift the voltage of activation toward more negative potentials thereby affecting sodium channel activation and promoting spontaneous and repetitive firing. This Centruroides exilicauda (Bark scorpion) protein is Toxin Cex8.